The chain runs to 63 residues: Crotasin (63 aa).

Positions 1–22 are cleaved as a signal peptide; that stretch reads MKILYLLSAFLFLAFLSESGNA. 3 cysteine pairs are disulfide-bonded: Cys26–Cys56, Cys33–Cys50, and Cys38–Cys57.

In terms of tissue distribution, highly expressed in pancreas, heart, liver, brain and kidney. Expressed to a low extent in the venom gland.

It is found in the secreted. This Crotalus durissus terrificus (South American rattlesnake) protein is Crotasin.